Here is a 356-residue protein sequence, read N- to C-terminus: GTPase Obg (356 aa).

Residues 1 to 158 (MFIDSVKITL…RLVRLELKLI (158 aa)) form the Obg domain. Residues 159–339 (ADVGLVGFPN…LKFMLLEEIK (181 aa)) enclose the OBG-type G domain. GTP-binding positions include 165-172 (GFPNVGKS), 190-194 (FTTLT), 212-215 (DIPG), 280-283 (SKSD), and 320-322 (SSL). Residues S172 and T192 each coordinate Mg(2+).

The protein belongs to the TRAFAC class OBG-HflX-like GTPase superfamily. OBG GTPase family. Monomer. Requires Mg(2+) as cofactor.

Its subcellular location is the cytoplasm. In terms of biological role, an essential GTPase which binds GTP, GDP and possibly (p)ppGpp with moderate affinity, with high nucleotide exchange rates and a fairly low GTP hydrolysis rate. Plays a role in control of the cell cycle, stress response, ribosome biogenesis and in those bacteria that undergo differentiation, in morphogenesis control. The sequence is that of GTPase Obg from Campylobacter jejuni subsp. jejuni serotype O:23/36 (strain 81-176).